The sequence spans 292 residues: Elongation factor Ts (292 aa).

The involved in Mg(2+) ion dislocation from EF-Tu stretch occupies residues 82-85; that stretch reads TDFV.

The protein belongs to the EF-Ts family.

It localises to the cytoplasm. Functionally, associates with the EF-Tu.GDP complex and induces the exchange of GDP to GTP. It remains bound to the aminoacyl-tRNA.EF-Tu.GTP complex up to the GTP hydrolysis stage on the ribosome. The polypeptide is Elongation factor Ts (Bordetella petrii (strain ATCC BAA-461 / DSM 12804 / CCUG 43448)).